Consider the following 403-residue polypeptide: D-galactonate dehydratase family member ManD (403 aa).

Substrate is bound by residues asparagine 37 and histidine 122. Catalysis depends on tyrosine 159, which acts as the Proton donor/acceptor. Aspartate 211 contacts Mg(2+). Histidine 213 functions as the Proton donor/acceptor in the catalytic mechanism. Positions 237 and 263 each coordinate Mg(2+). Glutamate 263, arginine 284, histidine 313, aspartate 317, and glutamate 340 together coordinate substrate.

Belongs to the mandelate racemase/muconate lactonizing enzyme family. GalD subfamily. Mg(2+) serves as cofactor.

The catalysed reaction is D-mannonate = 2-dehydro-3-deoxy-D-gluconate + H2O. It carries out the reaction D-gluconate = 2-dehydro-3-deoxy-D-gluconate + H2O. Functionally, has low dehydratase activity with D-mannonate and D-gluconate, suggesting that these are not physiological substrates and that it has no significant role in the in vivo degradation of these compounds. Has no detectable activity with a panel of 70 other acid sugars (in vitro). This is D-galactonate dehydratase family member ManD (manD) from Chromohalobacter salexigens (strain ATCC BAA-138 / DSM 3043 / CIP 106854 / NCIMB 13768 / 1H11).